Consider the following 1247-residue polypeptide: Leucine-rich repeat-containing protein 53 (1247 aa).

LRR repeat units follow at residues 34–55 (TTRVLIITDGYLSSIESTNLSL), 58–79 (NLALLSLSRNGIEDVQEDALHG), 82–102 (MLRTLLLEHNQISSSSLTDHT), 108–129 (SLQVLVLSNNALRTLRGSWFRN), 132–153 (GLTRLQLDGNQITNLTDSSFGG), 158–179 (SLRYLDLSNNFISYIGKDAFRP), and 182–203 (QLQEVDLSRNRLAHMPDVFTPL). An LRRCT domain is found at 214-271 (NQWSCTCDLHPLARFLRNYIKSSAHTLRNAKDLNCQPSTAAVAAAQSVLRLSETNCDS). The helical transmembrane segment at 294–314 (LLTVLGFAGAVGLTCLGLVVF) threads the bilayer. 3 disordered regions span residues 828 to 866 (SAGHIPDGNTSKLPQPTPTDAEHRHSHSQFSTEQMEDAT), 887 to 927 (VLPF…SPRN), and 1223 to 1247 (ENSAPKPVLYPPSAEYATTSPLETE). 2 stretches are compositionally biased toward polar residues: residues 898–927 (DQGTTESTEHMGQNVSKTSELNQFSLSPRN) and 1238–1247 (YATTSPLETE).

It is found in the membrane. This chain is Leucine-rich repeat-containing protein 53 (LRRC53), found in Homo sapiens (Human).